A 284-amino-acid polypeptide reads, in one-letter code: Polyamine aminopropyltransferase (284 aa).

One can recognise a PABS domain in the interval 2–237 (ELWYTEKHTE…GHWLFGFASK (236 aa)). Glutamine 31 contacts S-methyl-5'-thioadenosine. Positions 62 and 86 each coordinate spermidine. Residues glutamate 106 and 137–138 (DG) contribute to the S-methyl-5'-thioadenosine site. Catalysis depends on aspartate 155, which acts as the Proton acceptor. 155–158 (DSTD) is a binding site for spermidine. An S-methyl-5'-thioadenosine-binding site is contributed by proline 162.

The protein belongs to the spermidine/spermine synthase family. Homodimer or homotetramer.

Its subcellular location is the cytoplasm. The catalysed reaction is S-adenosyl 3-(methylsulfanyl)propylamine + putrescine = S-methyl-5'-thioadenosine + spermidine + H(+). It participates in amine and polyamine biosynthesis; spermidine biosynthesis; spermidine from putrescine: step 1/1. Its function is as follows. Catalyzes the irreversible transfer of a propylamine group from the amino donor S-adenosylmethioninamine (decarboxy-AdoMet) to putrescine (1,4-diaminobutane) to yield spermidine. The chain is Polyamine aminopropyltransferase from Clostridium botulinum (strain Alaska E43 / Type E3).